Here is a 284-residue protein sequence, read N- to C-terminus: D-tagatose-1,6-bisphosphate aldolase subunit GatY (284 aa).

Residue Asp-82 is the Proton donor of the active site. Zn(2+) contacts are provided by His-83 and His-180. Gly-181 lines the dihydroxyacetone phosphate pocket. His-208 is a Zn(2+) binding site. Dihydroxyacetone phosphate contacts are provided by residues 209-211 and 230-233; these read GAS and NVAT.

This sequence belongs to the class II fructose-bisphosphate aldolase family. TagBP aldolase GatY subfamily. As to quaternary structure, forms a complex with GatZ. Zn(2+) serves as cofactor.

It catalyses the reaction D-tagatofuranose 1,6-bisphosphate = D-glyceraldehyde 3-phosphate + dihydroxyacetone phosphate. Its pathway is carbohydrate metabolism; D-tagatose 6-phosphate degradation; D-glyceraldehyde 3-phosphate and glycerone phosphate from D-tagatose 6-phosphate: step 2/2. Functionally, catalytic subunit of the tagatose-1,6-bisphosphate aldolase GatYZ, which catalyzes the reversible aldol condensation of dihydroxyacetone phosphate (DHAP or glycerone-phosphate) with glyceraldehyde 3-phosphate (G3P) to produce tagatose 1,6-bisphosphate (TBP). Requires GatZ subunit for full activity and stability. Is involved in the catabolism of galactitol. This is D-tagatose-1,6-bisphosphate aldolase subunit GatY from Shigella flexneri.